We begin with the raw amino-acid sequence, 372 residues long: UDP-N-acetylglucosamine--N-acetylmuramyl-(pentapeptide) pyrophosphoryl-undecaprenol N-acetylglucosamine transferase (372 aa).

Residues 14–16 (TGG), asparagine 128, arginine 169, serine 201, isoleucine 257, and glutamine 302 each bind UDP-N-acetyl-alpha-D-glucosamine.

The protein belongs to the glycosyltransferase 28 family. MurG subfamily.

Its subcellular location is the cell inner membrane. The enzyme catalyses di-trans,octa-cis-undecaprenyl diphospho-N-acetyl-alpha-D-muramoyl-L-alanyl-D-glutamyl-meso-2,6-diaminopimeloyl-D-alanyl-D-alanine + UDP-N-acetyl-alpha-D-glucosamine = di-trans,octa-cis-undecaprenyl diphospho-[N-acetyl-alpha-D-glucosaminyl-(1-&gt;4)]-N-acetyl-alpha-D-muramoyl-L-alanyl-D-glutamyl-meso-2,6-diaminopimeloyl-D-alanyl-D-alanine + UDP + H(+). It functions in the pathway cell wall biogenesis; peptidoglycan biosynthesis. Functionally, cell wall formation. Catalyzes the transfer of a GlcNAc subunit on undecaprenyl-pyrophosphoryl-MurNAc-pentapeptide (lipid intermediate I) to form undecaprenyl-pyrophosphoryl-MurNAc-(pentapeptide)GlcNAc (lipid intermediate II). The protein is UDP-N-acetylglucosamine--N-acetylmuramyl-(pentapeptide) pyrophosphoryl-undecaprenol N-acetylglucosamine transferase of Bacteroides thetaiotaomicron (strain ATCC 29148 / DSM 2079 / JCM 5827 / CCUG 10774 / NCTC 10582 / VPI-5482 / E50).